A 102-amino-acid polypeptide reads, in one-letter code: Small ribosomal subunit protein uS10 (102 aa).

The interval 34–61 (MAGPIPLPTKTLKVTTRKSTDGEGSSSF) is disordered.

This sequence belongs to the universal ribosomal protein uS10 family. Part of the 30S ribosomal subunit.

Its function is as follows. Involved in the binding of tRNA to the ribosomes. The chain is Small ribosomal subunit protein uS10 from Methanococcus aeolicus (strain ATCC BAA-1280 / DSM 17508 / OCM 812 / Nankai-3).